A 179-amino-acid chain; its full sequence is Monothiol glutaredoxin-S12, chloroplastic (179 aa).

A chloroplast-targeting transit peptide spans 1–61 (MVAATVNLAN…WPPLRCSSVK (61 aa)). Ala62 bears the N-acetylalanine mark. Residues 75–176 (EETVKTTVAE…AILAEANGKN (102 aa)) enclose the Glutaredoxin domain. Cys95 is a [2Fe-2S] cluster binding site.

Belongs to the glutaredoxin family. CPYC subfamily.

The protein localises to the plastid. It is found in the chloroplast. Functionally, may only reduce GSH-thiol disulfides, but not protein disulfides. The sequence is that of Monothiol glutaredoxin-S12, chloroplastic (GRXS12) from Arabidopsis thaliana (Mouse-ear cress).